The sequence spans 2610 residues: E3 ubiquitin-protein ligase HECTD1 (2610 aa).

The segment at 246–269 is disordered; it reads TVSGPSSACKPGRSTTGAPSTTAD. A compositionally biased stretch (polar residues) spans 258-269; that stretch reads RSTTGAPSTTAD. ANK repeat units follow at residues 395–424, 426–455, 459–491, and 579–612; these read VGQTLLNWASAFGTQEMVEFLCERGADVNR, QRSSSLHYAACFGRPQVAKTLLRHGANPDL, DGKTPLDKARERGHSEVVAILQSPGDWMCPVNK, and ITATVLDQEDDDDGHLLALQIIRDLVDKGGDIFL. Residues 489–513 are disordered; the sequence is VNKGDDKKKKDTNKDEEECNEPKGD. The segment covering 491–501 has biased composition (basic and acidic residues); sequence KGDDKKKKDTN. Disordered stretches follow at residues 627-657 and 707-748; these read LAGPSSDDENEEESKPEKEDEPQEDAKELQQ and SSGS…LSAP. 2 positions are modified to phosphoserine: serine 631 and serine 640. The segment covering 639–657 has biased composition (basic and acidic residues); the sequence is ESKPEKEDEPQEDAKELQQ. Positions 707 to 717 are enriched in low complexity; sequence SSGSPEGGSDS. The segment covering 718–729 has biased composition (basic and acidic residues); sequence SESRSEFLEKLQ. Residues 1266–1338 form the MIB/HERC2 domain; the sequence is VRSQVLKYMV…KFDLKLAPGY (73 aa). Disordered stretches follow at residues 1343–1406 and 1433–1483; these read VASP…KTER and ENVP…SMGI. A compositionally biased stretch (polar residues) spans 1348-1365; sequence PVSSTVSGTTQSWSSLVK. Low complexity-rich tracts occupy residues 1373-1395 and 1441-1458; these read SAAAGSSSRKGSSSSVCSVASSS and GSSSSASTSTLTAETGSE. Serine 1384 is modified (phosphoserine). The segment covering 1469-1479 has biased composition (polar residues); the sequence is SVRTPGESSAI. At serine 1488 the chain carries Phosphoserine. The tract at residues 1496-1515 is disordered; sequence ELTNKEAASQRPLSSSASNR. Serine 1567 bears the Phosphoserine mark. Disordered stretches follow at residues 1592–1611 and 1674–1757; these read GAQSFPNLTTPGTTSTVTMS and ELDD…KGGR. Low complexity predominate over residues 1600–1611; the sequence is TTPGTTSTVTMS. Residues 1674–1703 are compositionally biased toward acidic residues; sequence ELDDDEDLPEPDEEDDENEDDNQEDQEYEE. Threonine 1760 carries the post-translational modification Phosphothreonine. Serine 1772 carries the post-translational modification Phosphoserine. Positions 1777-1797 are disordered; the sequence is AFDPRPGRTNVQQTTDLEIPP. Residues 2029 to 2103 are K-box; the sequence is FTFPPDEFTS…AIVWLQNRRE (75 aa). The HECT domain occupies 2151 to 2610; that stretch reads IHADRKSVLE…ATMEKGFHLN (460 aa). Residues 2297–2318 are disordered; that stretch reads HCTESQSEASTEEGHDSLSVGS. A Phosphoserine modification is found at serine 2318. Catalysis depends on cysteine 2579, which acts as the Glycyl thioester intermediate.

Belongs to the UPL family. K-HECT subfamily. In terms of assembly, interacts with IGSF1.

The catalysed reaction is S-ubiquitinyl-[E2 ubiquitin-conjugating enzyme]-L-cysteine + [acceptor protein]-L-lysine = [E2 ubiquitin-conjugating enzyme]-L-cysteine + N(6)-ubiquitinyl-[acceptor protein]-L-lysine.. It functions in the pathway protein modification; protein ubiquitination. Its function is as follows. E3 ubiquitin-protein ligase which accepts ubiquitin from an E2 ubiquitin-conjugating enzyme in the form of a thioester and then directly transfers the ubiquitin to targeted substrates. Mediates 'Lys-63'-linked polyubiquitination of HSP90AA1 which leads to its intracellular localization and reduced secretion. Negatively regulating HSP90AA1 secretion in cranial mesenchyme cells may impair their emigration and may be essential for the correct development of the cranial neural folds and neural tube closure. Catalyzes ubiquitination and degradation of ZNF622, an assembly factor for the ribosomal 60S subunit, in hematopoietic cells, thereby promoting hematopoietic stem cell renewal. This Homo sapiens (Human) protein is E3 ubiquitin-protein ligase HECTD1.